We begin with the raw amino-acid sequence, 193 residues long: MFNLPNKITLARIALIPIFMIIMLAPFDWGRLEVGDESIPVAHLAGAILFIIASTTDWVDGYYARKLNLVTNFGKFLDPLADKLLVSAALIILVQFDLAPAWMVIVIISREFAVTGLRLVLAGTGEVVAANMLGKIKTWAQIIAVSALLLHNLPFELVSFPFADLALWVAVFFTVVSGWEYFSKNWEALKTSN.

The next 4 helical transmembrane spans lie at Ile8–Asp28, Ile39–Val59, Ala88–Ile108, and Leu157–Ser177.

It belongs to the CDP-alcohol phosphatidyltransferase class-I family.

It is found in the cell membrane. It catalyses the reaction a CDP-1,2-diacyl-sn-glycerol + sn-glycerol 3-phosphate = a 1,2-diacyl-sn-glycero-3-phospho-(1'-sn-glycero-3'-phosphate) + CMP + H(+). The protein operates within phospholipid metabolism; phosphatidylglycerol biosynthesis; phosphatidylglycerol from CDP-diacylglycerol: step 1/2. In terms of biological role, this protein catalyzes the committed step to the synthesis of the acidic phospholipids. The sequence is that of CDP-diacylglycerol--glycerol-3-phosphate 3-phosphatidyltransferase (pgsA) from Bacillus subtilis (strain 168).